The following is a 157-amino-acid chain: Succinate dehydrogenase assembly factor 2-A, mitochondrial (157 aa).

The transit peptide at 1-21 (MLRQVLSSTSVRRLLVSPTRC) directs the protein to the mitochondrion.

This sequence belongs to the SDHAF2 family. In terms of assembly, interacts with the flavoprotein subunit within the SDH catalytic dimer.

The protein resides in the mitochondrion matrix. Functionally, plays an essential role in the assembly of succinate dehydrogenase (SDH), an enzyme complex (also referred to as respiratory complex II) that is a component of both the tricarboxylic acid (TCA) cycle and the mitochondrial electron transport chain, and which couples the oxidation of succinate to fumarate with the reduction of ubiquinone (coenzyme Q) to ubiquinol. Required for flavinylation (covalent attachment of FAD) of the flavoprotein subunit of the SDH catalytic dimer. This chain is Succinate dehydrogenase assembly factor 2-A, mitochondrial, found in Drosophila mojavensis (Fruit fly).